Here is a 676-residue protein sequence, read N- to C-terminus: UvrABC system protein B (676 aa).

In terms of domain architecture, Helicase ATP-binding spans 35 to 192 (QGVADGLMYQ…ARLVAMQYTR (158 aa)). 48-55 (GVTGSGKT) is a binding site for ATP. A Beta-hairpin motif is present at residues 101–124 (YYDYYQPEAYVPTRDLFIEKDSSV). The Helicase C-terminal domain maps to 439 to 605 (QVDDLLGEIR…GVNKAVRELI (167 aa)). The 36-residue stretch at 634–669 (AREIKRLEKLMMDHARNLEFEQAAAARDALTALKNR) folds into the UVR domain.

Belongs to the UvrB family. As to quaternary structure, forms a heterotetramer with UvrA during the search for lesions. Interacts with UvrC in an incision complex.

The protein localises to the cytoplasm. Functionally, the UvrABC repair system catalyzes the recognition and processing of DNA lesions. A damage recognition complex composed of 2 UvrA and 2 UvrB subunits scans DNA for abnormalities. Upon binding of the UvrA(2)B(2) complex to a putative damaged site, the DNA wraps around one UvrB monomer. DNA wrap is dependent on ATP binding by UvrB and probably causes local melting of the DNA helix, facilitating insertion of UvrB beta-hairpin between the DNA strands. Then UvrB probes one DNA strand for the presence of a lesion. If a lesion is found the UvrA subunits dissociate and the UvrB-DNA preincision complex is formed. This complex is subsequently bound by UvrC and the second UvrB is released. If no lesion is found, the DNA wraps around the other UvrB subunit that will check the other stand for damage. The chain is UvrABC system protein B from Bordetella avium (strain 197N).